The following is a 966-amino-acid chain: Insulin-degrading enzyme-like 2 (966 aa).

A Zn(2+)-binding site is contributed by His-71. The Proton acceptor role is filled by Glu-74. His-75 provides a ligand contact to Zn(2+). Glu-145 is an active-site residue. Glu-152 serves as a coordination point for Zn(2+).

This sequence belongs to the peptidase M16 family. Zn(2+) serves as cofactor.

The polypeptide is Insulin-degrading enzyme-like 2 (Arabidopsis thaliana (Mouse-ear cress)).